A 704-amino-acid chain; its full sequence is Elongation factor G (704 aa).

The region spanning aspartate 8–leucine 291 is the tr-type G domain. GTP is bound by residues alanine 17–threonine 24, aspartate 90–histidine 94, and asparagine 144–aspartate 147.

It belongs to the TRAFAC class translation factor GTPase superfamily. Classic translation factor GTPase family. EF-G/EF-2 subfamily.

It is found in the cytoplasm. Functionally, catalyzes the GTP-dependent ribosomal translocation step during translation elongation. During this step, the ribosome changes from the pre-translocational (PRE) to the post-translocational (POST) state as the newly formed A-site-bound peptidyl-tRNA and P-site-bound deacylated tRNA move to the P and E sites, respectively. Catalyzes the coordinated movement of the two tRNA molecules, the mRNA and conformational changes in the ribosome. This is Elongation factor G from Chlorobium phaeovibrioides (strain DSM 265 / 1930) (Prosthecochloris vibrioformis (strain DSM 265)).